Consider the following 448-residue polypeptide: ATP-dependent protease ATPase subunit HslU (448 aa).

ATP contacts are provided by residues Val21, 63-68 (GVGKTE), Asp260, Glu326, and Arg398.

This sequence belongs to the ClpX chaperone family. HslU subfamily. In terms of assembly, a double ring-shaped homohexamer of HslV is capped on each side by a ring-shaped HslU homohexamer. The assembly of the HslU/HslV complex is dependent on binding of ATP.

It localises to the cytoplasm. ATPase subunit of a proteasome-like degradation complex; this subunit has chaperone activity. The binding of ATP and its subsequent hydrolysis by HslU are essential for unfolding of protein substrates subsequently hydrolyzed by HslV. HslU recognizes the N-terminal part of its protein substrates and unfolds these before they are guided to HslV for hydrolysis. In Sulfurihydrogenibium sp. (strain YO3AOP1), this protein is ATP-dependent protease ATPase subunit HslU.